The primary structure comprises 275 residues: Ribosomal RNA small subunit methyltransferase A (275 aa).

6 residues coordinate S-adenosyl-L-methionine: asparagine 19, leucine 21, glycine 46, glutamate 71, aspartate 94, and asparagine 117.

This sequence belongs to the class I-like SAM-binding methyltransferase superfamily. rRNA adenine N(6)-methyltransferase family. RsmA subfamily.

It localises to the cytoplasm. It carries out the reaction adenosine(1518)/adenosine(1519) in 16S rRNA + 4 S-adenosyl-L-methionine = N(6)-dimethyladenosine(1518)/N(6)-dimethyladenosine(1519) in 16S rRNA + 4 S-adenosyl-L-homocysteine + 4 H(+). In terms of biological role, specifically dimethylates two adjacent adenosines (A1518 and A1519) in the loop of a conserved hairpin near the 3'-end of 16S rRNA in the 30S particle. May play a critical role in biogenesis of 30S subunits. The chain is Ribosomal RNA small subunit methyltransferase A from Burkholderia pseudomallei (strain 668).